A 565-amino-acid polypeptide reads, in one-letter code: Histone acetyltransferase ESA1 (565 aa).

A disordered region spans residues 1–33 (MAPRTQKSTSGTPGGSGTPGPDEGPQISPGGTY). The region spanning 38 to 117 (VVVGCKAFVQ…DEWVSGTRLI (80 aa)) is the Tudor-knot domain. Residues 173–217 (AQAAKNVQGESGLETPQKRKADSGDTSTAQSIRADSIDADADGED) are disordered. Positions 284-553 (ARVKNLNKIQ…INPQKLHWTA (270 aa)) constitute an MYST-type HAT domain. The segment at 317-342 (LYICEMCLSYFPSPFTLKRHRSKCTL) adopts a C2HC MYST-type zinc-finger fold. Residues 367-388 (RTWCRNLCLLSKCFLDHKTLYY) carry the ESA1-RPD3 motif motif. Position 384 is an N6-acetyllysine; by autocatalysis (K384). Acetyl-CoA contacts are provided by residues 425–429 (ACILT) and 434–440 (QRAGYGK). E460 acts as the Proton donor/acceptor in catalysis. Position 464 (S464) interacts with acetyl-CoA.

This sequence belongs to the MYST (SAS/MOZ) family. As to quaternary structure, component of the NuA4 histone acetyltransferase complex. Post-translationally, autoacetylation at Lys-384 is required for proper function.

It is found in the nucleus. The protein localises to the chromosome. The catalysed reaction is L-lysyl-[histone] + acetyl-CoA = N(6)-acetyl-L-lysyl-[histone] + CoA + H(+). The enzyme catalyses L-lysyl-[protein] + acetyl-CoA = N(6)-acetyl-L-lysyl-[protein] + CoA + H(+). It catalyses the reaction 2-hydroxyisobutanoyl-CoA + L-lysyl-[protein] = N(6)-(2-hydroxyisobutanoyl)-L-lysyl-[protein] + CoA + H(+). It carries out the reaction (2E)-butenoyl-CoA + L-lysyl-[protein] = N(6)-(2E)-butenoyl-L-lysyl-[protein] + CoA + H(+). In terms of biological role, catalytic component of the NuA4 histone acetyltransferase (HAT) complex which is involved in epigenetic transcriptional activation of selected genes principally by acetylation of nucleosomal histones H4, H3, H2B, H2A and H2A variant H2A.Z. Acetylates histone H4 to form H4K5ac, H4K8ac, H4K12ac and H4K16ac, histone H3 to form H3K14ac, and histone H2A to form H2AK4ac and H2AK7ac. The NuA4 complex is involved in the DNA damage response and is required for chromosome segregation. The NuA4 complex plays a direct role in repair of DNA double-strand breaks (DSBs) through homologous recombination. Recruitment to promoters depends on H3K4me. Also acetylates non-histone proteins. In addition to protein acetyltransferase, can use different acyl-CoA substrates, such as 2-hydroxyisobutanoyl-CoA (2-hydroxyisobutyryl-CoA) or (2E)-butenoyl-CoA (crotonyl-CoA), and is able to mediate protein 2-hydroxyisobutyrylation and crotonylation, respectively. The sequence is that of Histone acetyltransferase ESA1 (ESA1) from Mycosarcoma maydis (Corn smut fungus).